Here is a 339-residue protein sequence, read N- to C-terminus: Ketol-acid reductoisomerase (NADP(+)) (339 aa).

In terms of domain architecture, KARI N-terminal Rossmann spans 1–182 (MRVYYDRDAD…GGGRSGIIET (182 aa)). Residues 24-27 (YGSQ), Arg-48, Ser-51, Ser-53, and 83-86 (DELQ) each bind NADP(+). The active site involves His-108. Residue Gly-134 participates in NADP(+) binding. The region spanning 183 to 328 (TFREECETDL…EKLRAMMPWI (146 aa)) is the KARI C-terminal knotted domain. Mg(2+) contacts are provided by Asp-191, Glu-195, Glu-227, and Glu-231. Residue Ser-252 coordinates substrate.

This sequence belongs to the ketol-acid reductoisomerase family. Mg(2+) serves as cofactor.

It catalyses the reaction (2R)-2,3-dihydroxy-3-methylbutanoate + NADP(+) = (2S)-2-acetolactate + NADPH + H(+). It carries out the reaction (2R,3R)-2,3-dihydroxy-3-methylpentanoate + NADP(+) = (S)-2-ethyl-2-hydroxy-3-oxobutanoate + NADPH + H(+). It participates in amino-acid biosynthesis; L-isoleucine biosynthesis; L-isoleucine from 2-oxobutanoate: step 2/4. It functions in the pathway amino-acid biosynthesis; L-valine biosynthesis; L-valine from pyruvate: step 2/4. In terms of biological role, involved in the biosynthesis of branched-chain amino acids (BCAA). Catalyzes an alkyl-migration followed by a ketol-acid reduction of (S)-2-acetolactate (S2AL) to yield (R)-2,3-dihydroxy-isovalerate. In the isomerase reaction, S2AL is rearranged via a Mg-dependent methyl migration to produce 3-hydroxy-3-methyl-2-ketobutyrate (HMKB). In the reductase reaction, this 2-ketoacid undergoes a metal-dependent reduction by NADPH to yield (R)-2,3-dihydroxy-isovalerate. This Chelativorans sp. (strain BNC1) protein is Ketol-acid reductoisomerase (NADP(+)).